Reading from the N-terminus, the 307-residue chain is OTU domain-containing protein 2 (307 aa).

2 disordered regions span residues 23–46 (ENKD…RKEV) and 96–130 (SRDE…AKRD). Residues 103–114 (QNVPVQQQQQGQ) are compositionally biased toward low complexity. The OTU domain occupies 167–307 (LKQFDIQPDG…GEHYNSLHDS (141 aa)).

This chain is OTU domain-containing protein 2 (OTU2), found in Saccharomyces cerevisiae (strain ATCC 204508 / S288c) (Baker's yeast).